Consider the following 456-residue polypeptide: UDP-N-acetylmuramate--L-alanine ligase (456 aa).

117–123 (GTHGKTT) lines the ATP pocket.

Belongs to the MurCDEF family.

It is found in the cytoplasm. The enzyme catalyses UDP-N-acetyl-alpha-D-muramate + L-alanine + ATP = UDP-N-acetyl-alpha-D-muramoyl-L-alanine + ADP + phosphate + H(+). It participates in cell wall biogenesis; peptidoglycan biosynthesis. Functionally, cell wall formation. The chain is UDP-N-acetylmuramate--L-alanine ligase from Clostridium tetani (strain Massachusetts / E88).